The chain runs to 293 residues: MFVHAHPDDEVISTGIALASYAAAPDTSVTLVTCTLGEEGEVLVPELINLRADRGDQLGGYRIGELAGSCAALGITDQRFLGGPGRWRDSGMIGTPANDHPRSLWRADLAEATAELVRIVRDVRPHVLVSYDSNGGYGHPDHIRAHQVTARAFTDAADPAFAPGTGEPWQVAKRYETAMPRSRAVAGFELFHDSADRNNPFAGLKSVDDLAMTLVDDADITAEISAPEFFDAKIAAMRAHRTQMAVDGFFFALADGIGQRAWGVEHFVLAAGTRGPGDGPDGRERDLLAGVAF.

Histidine 6, aspartate 9, and histidine 142 together coordinate Zn(2+).

It belongs to the MshB deacetylase family. The cofactor is Zn(2+).

The enzyme catalyses 1D-myo-inositol 2-acetamido-2-deoxy-alpha-D-glucopyranoside + H2O = 1D-myo-inositol 2-amino-2-deoxy-alpha-D-glucopyranoside + acetate. Catalyzes the deacetylation of 1D-myo-inositol 2-acetamido-2-deoxy-alpha-D-glucopyranoside (GlcNAc-Ins) in the mycothiol biosynthesis pathway. In Frankia alni (strain DSM 45986 / CECT 9034 / ACN14a), this protein is 1D-myo-inositol 2-acetamido-2-deoxy-alpha-D-glucopyranoside deacetylase 2.